Here is a 420-residue protein sequence, read N- to C-terminus: Glutamyl-tRNA reductase (420 aa).

Substrate is bound by residues 49–52 (TCNR), serine 110, 115–117 (EHQ), and glutamine 121. The active-site Nucleophile is the cysteine 50. 190-195 (GSGTIN) is a binding site for NADP(+).

Belongs to the glutamyl-tRNA reductase family. Homodimer.

It catalyses the reaction (S)-4-amino-5-oxopentanoate + tRNA(Glu) + NADP(+) = L-glutamyl-tRNA(Glu) + NADPH + H(+). It participates in porphyrin-containing compound metabolism; protoporphyrin-IX biosynthesis; 5-aminolevulinate from L-glutamyl-tRNA(Glu): step 1/2. In terms of biological role, catalyzes the NADPH-dependent reduction of glutamyl-tRNA(Glu) to glutamate 1-semialdehyde (GSA). This chain is Glutamyl-tRNA reductase, found in Wigglesworthia glossinidia brevipalpis.